The chain runs to 446 residues: N-succinylarginine dihydrolase (446 aa).

Substrate-binding positions include 19-28 (AGLSYGNVAS), Asn110, and 137-138 (HR). Residue Glu174 is part of the active site. Position 214 (Arg214) interacts with substrate. The active site involves His250. Residues Asp252 and Asn363 each contribute to the substrate site. The active-site Nucleophile is the Cys369.

This sequence belongs to the succinylarginine dihydrolase family. Homodimer.

It carries out the reaction N(2)-succinyl-L-arginine + 2 H2O + 2 H(+) = N(2)-succinyl-L-ornithine + 2 NH4(+) + CO2. Its pathway is amino-acid degradation; L-arginine degradation via AST pathway; L-glutamate and succinate from L-arginine: step 2/5. Its function is as follows. Catalyzes the hydrolysis of N(2)-succinylarginine into N(2)-succinylornithine, ammonia and CO(2). The chain is N-succinylarginine dihydrolase from Pseudoalteromonas atlantica (strain T6c / ATCC BAA-1087).